The chain runs to 105 residues: Mitomycin resistance protein McrB (105 aa).

Functionally, involved in mitomycin resistance. May operate with McrA or may be a type of transcriptional activator protein. This chain is Mitomycin resistance protein McrB (mcrB), found in Streptomyces lavendulae.